A 1575-amino-acid polypeptide reads, in one-letter code: MPHEELPSLQRPRYGSIVDDERLSAEEMDERRRQNIAYEYLCHLEEAKRWMEVCLVEELPPTTELEEGLRNGVYLAKLAKFFAPKMVSEKKIYDVEQTRYKKSGLHFRHTDNTVQWLRAMESIGLPKIFYPETTDVYDRKNIPRMIYCIHALSLYLFKLGIAPQIQDLLGKVDFTEEEISNMRKELEKYGIQMPSFSKIGGILANELSVDEAALHAAVIAINEAVEKGIAEQTVVTLRNPNAVLTLVDDNLAPEYQKELWDAKKKKEENARLKNSCISEEERDAYEELLTQAEIQGNINKVNRQAAVDHINAVIPEGDPENTLLALKKPEAQLPAVYPFAAAMYQNELFNLQKQNTMNYLAHEELLIAVEMLSAVALLNQALESNDLVSVQNQLRSPAIGLNNLDKAYVERYANTLLSVKLEVLSQGQDNLSWNEIQNCIDMVNAQIQEENDRVVAVGYINEAIDEGNPLRTLETLLLPTANISDVDPAHAQHYQDVLYHAKSQKLGDSESVSKVLWLDEIQQAVDDANVDKDRAKQWVTLVVDVNQCLEGKKSSDILSVLKSSTSNANDIIPECADKYYDALVKAKELKSERVSSDGSWLKLNLHKKYDYYYNTDSKESSWVTPESCLYKESWLTGKEIEDIIEEVTVGYIRENIWSASEELLLRFQATSSGPILREEFEARKSFLHEQEENVVKIQAFWKGYKQRKEYMHRRQTFIDNTDSIVKIQSWFRMATARKSYLSRLQYFRDHNNEIVKIQSLLRANKARDDYKTLVGSENPPLTVIRKFVYLLDQSDLDFQEELEVARLREEVVTKIRANQQLEKDLNLMDIKIGLLVKNRITLEDVISHSKKLNKKKGGEMEILNNTDNQGIKSLSKERRKTLETYQQLFYLLQTNPLYLAKLIFQMPQNKSTKFMDTVIFTLYNYASNQREEYLLLKLFKTALEEEIKSKVDQVQDIVTGNPTVIKMVVSFNRGARGQNTLRQLLAPVVKEIIDDKSLIINTNPVEVYKAWVNQLETQTGEASKLPYDVTTEQALTYPEVKNKLEASIENLRRVTDKVLNSIISSLDLLPYGLRYIAKVLKNSIHEKFPDATEDELLKIVGNLLYYRYMNPAIVAPDGFDIIDMTAGGQINSDQRRNLGSVAKVLQHAASNKLFEGENEHLSSMNNYLSETYQEFRKYFKEACNVPEPEEKFNMDKYTDLVTVSKPVIYISIEEIISTHSLLLEHQDAIAPEKNDLLSELLGSLGEVPTVESFLGEGAVDPNDPNKANTLSQLSKTEISLVLTSKYDIEDGEAIDSRSLMIKTKKLIIDVIRNQPGNTLTEILETPATAQQEVDHATDMVSRAMIDSRTPEEMKHSQSMIEDAQLPLEQKKRKIQRNLRTLEQTGHVSSENKYQDILNEIAKDIRNQRIYRKLRKAELAKLQQTLNALNKKAAFYEEQINYYDTYIKTCLDNLKRKNTRRSIKLDGKGEPKGAKRAKPVKYTAAKLHEKGVLLDIDDLQTNQFKNVTFDIIATEDVGIFDVRSKFLGVEMEKVQLNIQDLLQMQYEGVAVMKMFDKVKVNVNLLIYLLNKKFYGK.

Position 16 is a phosphoserine (serine 16). Residues 41–156 form the Calponin-homology (CH) domain; the sequence is LCHLEEAKRW…YCIHALSLYL (116 aa). Threonine 356 is subject to Phosphothreonine. Residues 594 to 627 enclose the WW domain; it reads VSSDGSWLKLNLHKKYDYYYNTDSKESSWVTPES. Phosphoserine occurs at positions 595, 599, and 685. 3 IQ domains span residues 690-719, 720-749, and 750-779; these read QEEN…TFID, NTDS…YFRD, and HNNE…SENP. Threonine 716 is modified (phosphothreonine). Phosphothreonine is present on residues threonine 782, threonine 881, threonine 1002, and threonine 1269. One can recognise a Ras-GAP domain in the interval 933–1182; sequence YLLLKLFKTA…QEFRKYFKEA (250 aa). Residues serine 1271, serine 1279, serine 1358, and serine 1461 each carry the phosphoserine modification.

Isoform 2 expression is enhanced in testis.

Binds to activated CDC42 and RAC1 but does not seem to stimulate their GTPase activity. Associates with calmodulin. This chain is Ras GTPase-activating-like protein IQGAP2 (IQGAP2), found in Homo sapiens (Human).